The following is a 497-amino-acid chain: Dihydrolipoyl dehydrogenase (497 aa).

Residues 60 to 69 (EKEPSLGGTC), K78, G142, and 170 to 172 (TGS) each bind FAD. A disulfide bond links C69 and C74. Residues 207 to 214 (GAGVIGLE), E230, V264, and G302 each bind NAD(+). FAD-binding positions include D343 and 349–352 (MLAH). Residue H475 is the Proton acceptor of the active site.

This sequence belongs to the class-I pyridine nucleotide-disulfide oxidoreductase family. As to quaternary structure, homodimer. Requires FAD as cofactor.

It localises to the cytoplasm. The enzyme catalyses N(6)-[(R)-dihydrolipoyl]-L-lysyl-[protein] + NAD(+) = N(6)-[(R)-lipoyl]-L-lysyl-[protein] + NADH + H(+). This is Dihydrolipoyl dehydrogenase from Manduca sexta (Tobacco hawkmoth).